Here is a 1076-residue protein sequence, read N- to C-terminus: ESX secretion system protein YueB (1076 aa).

Residues 9–29 (IKLISAVIIILLLPVLFFRFI) form a helical membrane-spanning segment. Disordered regions lie at residues 372–404 (RLSLLKPKESDEKEDGEDTSDNKDDTDKEDIED) and 423–552 (IKDI…ETDI). A compositionally biased stretch (basic and acidic residues) spans 423 to 439 (IKDISEGLKEPEQEKPT). 2 stretches are compositionally biased toward polar residues: residues 449 to 495 (DDSP…NIET) and 503 to 522 (SKNVPEQDTNTENTGTSKTD). Residues 552-622 (ISGAKKRLNE…TKKLVDFDNN (71 aa)) adopt a coiled-coil conformation. The next 5 membrane-spanning stretches (helical) occupy residues 904 to 924 (TVPPVVILVIVLISSLLIGYF), 938 to 958 (ALFGILNILVGLMISLFGLNI), 964 to 984 (DQTIKWSVFTILLLVASSAFI), 995 to 1015 (GWVASAAMILFYVAPLIDLIM), and 1040 to 1060 (TMGITVLLIITVIAVALPLII).

The protein belongs to the EsaA family.

It is found in the cell membrane. In terms of biological role, required for YukE secretion. Probable component or regulator of the ESX/ESAT-6-like secretion system (BsEss). Bacteriophage SPP1 receptor. Essential for the irreversible adsorption of the bacteriophage. This chain is ESX secretion system protein YueB (yueB), found in Bacillus subtilis (strain 168).